Reading from the N-terminus, the 480-residue chain is Nuclear receptor subfamily 6 group A member 1 (480 aa).

The interval methionine 1–arginine 32 is disordered. Residues glutamine 57–glutamate 132 constitute a DNA-binding region (nuclear receptor). Zn(2+) contacts are provided by cysteine 60, cysteine 63, cysteine 77, cysteine 80, cysteine 96, cysteine 102, cysteine 112, and cysteine 115. NR C4-type zinc fingers lie at residues cysteine 60 to cysteine 80 and cysteine 96 to cysteine 120. Disordered stretches follow at residues arginine 131 to glutamate 150 and phenylalanine 162 to serine 199. Positions glutamate 165 to histidine 177 are enriched in basic and acidic residues. Residues histidine 172–leucine 253 are sufficient for interaction with UIMC1. Residues serine 187–serine 199 are compositionally biased toward low complexity. The NR LBD domain occupies glutamine 249–glutamate 480.

The protein belongs to the nuclear hormone receptor family. NR6 subfamily. Homodimer. Interacts with UIMC1. As to expression, shows highest expression in the germ cells of the adult testis.

The protein resides in the nucleus. In terms of biological role, orphan nuclear receptor that binds to a response element containing the sequence 5'-TCAAGGTCA-3'. Acts as a regulator of embryonic stem cell pluripotency by mediating repression of POU5F1/OCT4: binds to the DR0 element within the POU5F1/OCT4 promoter and inhibits POU5F1/OCT4 expression during embryonic stem cell differentiation. Involved in the regulation of gene expression in germ cell development during gametogenesis. This is Nuclear receptor subfamily 6 group A member 1 (NR6A1) from Homo sapiens (Human).